The chain runs to 109 residues: Class I hydrophobin 18 (109 aa).

The first 20 residues, 1–20, serve as a signal peptide directing secretion; the sequence is MFTEQVLNVIILLQTATVTA. 4 cysteine pairs are disulfide-bonded: C28–C88, C35–C82, C36–C69, and C89–C102. N-linked (GlcNAc...) asparagine glycosylation is found at N91 and N106.

Belongs to the fungal hydrophobin family. Self-assembles to form functional amyloid fibrils called rodlets. Self-assembly into fibrillar rodlets occurs spontaneously at hydrophobic:hydrophilic interfaces and the rodlets further associate laterally to form amphipathic monolayers.

It is found in the secreted. Its subcellular location is the cell wall. Aerial growth, conidiation, and dispersal of filamentous fungi in the environment rely upon a capability of their secreting small amphipathic proteins called hydrophobins (HPBs) with low sequence identity. Class I can self-assemble into an outermost layer of rodlet bundles on aerial cell surfaces, conferring cellular hydrophobicity that supports fungal growth, development and dispersal; whereas Class II form highly ordered films at water-air interfaces through intermolecular interactions but contribute nothing to the rodlet structure. This chain is Class I hydrophobin 18, found in Pleurotus ostreatus (strain PC15) (Oyster mushroom).